Reading from the N-terminus, the 441-residue chain is ATP-dependent RNA helicase SUB2 (441 aa).

Acidic residues predominate over residues 1-17; it reads MSHEGEEELLDYSDSEE. Positions 1-47 are disordered; it reads MSHEGEEELLDYSDSEEIALPSTTVESGSNGDAKAETTTVKEENTEQ. The span at 21–30 shows a compositional bias: polar residues; the sequence is PSTTVESGSN. Positions 33–46 are enriched in basic and acidic residues; it reads AKAETTTVKEENTE. The Q motif signature appears at 57–85; it reads TGFRDFLLKPELLRAIVDCGFEHPSEVQQ. A Helicase ATP-binding domain is found at 88–263; the sequence is IPQSILGTDV…KKFMSSPLEI (176 aa). 101–108 contacts ATP; that stretch reads AKAGVGKT. Residues 210–213 carry the DECD box motif; the sequence is DECD. The Helicase C-terminal domain occupies 275 to 436; that stretch reads GLQQYYVDVE…PYPAEGVDPS (162 aa).

This sequence belongs to the DEAD box helicase family. DECD subfamily.

It localises to the nucleus. It carries out the reaction ATP + H2O = ADP + phosphate + H(+). Functionally, ATP-binding RNA helicase involved in transcription elongation and required for the export of mRNA out of the nucleus. SUB2 also plays a role in pre-mRNA splicing and spliceosome assembly. May be involved in rDNA and telomeric silencing, and maintenance of genome integrity. The polypeptide is ATP-dependent RNA helicase SUB2 (SUB2) (Yarrowia lipolytica (strain CLIB 122 / E 150) (Yeast)).